A 96-amino-acid polypeptide reads, in one-letter code: Small ribosomal subunit protein bS6 (96 aa).

It belongs to the bacterial ribosomal protein bS6 family.

In terms of biological role, binds together with bS18 to 16S ribosomal RNA. In Mycobacterium leprae (strain TN), this protein is Small ribosomal subunit protein bS6 (rpsF).